Reading from the N-terminus, the 256-residue chain is L-erythrulose-1-phosphate isomerase (256 aa).

His-96 functions as the Electrophile in the catalytic mechanism. Glu-169 (proton acceptor) is an active-site residue. Substrate-binding residues include Gly-175 and Ser-212.

Belongs to the triosephosphate isomerase family. Homodimer.

It is found in the cytoplasm. It catalyses the reaction L-erythrulose 1-phosphate = D-erythrulose 4-phosphate. It participates in carbohydrate metabolism; erythritol degradation. In terms of biological role, catalyzes the isomerization of D-erythrulose-4P to L-erythrulose-1P. Involved in the degradation pathway of erythritol, that allows B.abortus to grow on this compound as the sole carbon source. In Brucella abortus (strain 2308), this protein is L-erythrulose-1-phosphate isomerase.